The sequence spans 1323 residues: ABC transporter C family member 12 (1323 aa).

Residues 110–396 (HCISLFFYSI…LPILIALGIQ (287 aa)) form the ABC transmembrane type-1 1 domain. 6 helical membrane passes run 111 to 131 (CISL…PEIL), 152 to 172 (MGYY…FCNY), 227 to 247 (VFGI…CLAL), 252 to 272 (IGWP…FNGL), 338 to 358 (ILIA…FSTY), and 375 to 395 (SYLN…ALGI). In terms of domain architecture, ABC transporter 1 spans 428–652 (VYMKNSTTTW…KLEFASLLQE (225 aa)). Residue 464-471 (GSVGSGKS) coordinates ATP. A disordered region spans residues 657–695 (ENTKGDDSDDDDDKKDDDKKEEKVEKPKQSDKDGTLISE). A compositionally biased stretch (basic and acidic residues) spans 672–690 (DDDKKEEKVEKPKQSDKDG). 5 helical membrane-spanning segments follow: residues 712–732 (VTAG…LETG), 772–792 (IYIG…FSFF), 840–860 (LIAT…ATLI), 862–882 (ISII…LFFI), and 952–972 (WLGL…CIFI). The ABC transmembrane type-1 2 domain maps to 720–1010 (FLFAMILFLL…GVLQAADTET (291 aa)). Residues 1047 to 1281 (IKFDNLVMRY…QNGLLTWLVN (235 aa)) enclose the ABC transporter 2 domain. 1081 to 1088 (GRTGAGKS) contributes to the ATP binding site.

This sequence belongs to the ABC transporter superfamily. ABCC family. Conjugate transporter (TC 3.A.1.208) subfamily.

The protein localises to the membrane. This is ABC transporter C family member 12 (abcC12) from Dictyostelium discoideum (Social amoeba).